Reading from the N-terminus, the 77-residue chain is Conotoxin VnMEKL-023 (77 aa).

A signal peptide spans 1-19 (MQKLTILLLVAAVLMSTQA). A propeptide spanning residues 20 to 37 (LIKGGGEKRPKEKIRFLS) is cleaved from the precursor. Disulfide bonds link C51/C65, C58/C69, and C64/C74.

The protein belongs to the conotoxin O2 superfamily. As to expression, expressed by the venom duct.

It localises to the secreted. This chain is Conotoxin VnMEKL-023, found in Conus ventricosus (Mediterranean cone).